The chain runs to 198 residues: Recombination protein RecR (198 aa).

Residues 57–72 (CSVCGHITDQDPCYIC) form a C4-type zinc finger. The 96-residue stretch at 80-175 (SVICVVQDPK…KLSRIAHGLP (96 aa)) folds into the Toprim domain.

Belongs to the RecR family.

Its function is as follows. May play a role in DNA repair. It seems to be involved in an RecBC-independent recombinational process of DNA repair. It may act with RecF and RecO. The protein is Recombination protein RecR of Bacillus subtilis (strain 168).